A 638-amino-acid polypeptide reads, in one-letter code: Phosphomethylpyrimidine synthase (638 aa).

Substrate is bound by residues Asn-235, Met-264, Tyr-293, His-329, 349 to 351, 390 to 393, and Glu-429; these read SRG and DGLR. Residue His-433 participates in Zn(2+) binding. Position 456 (Tyr-456) interacts with substrate. His-497 is a Zn(2+) binding site. Cys-577, Cys-580, and Cys-585 together coordinate [4Fe-4S] cluster.

This sequence belongs to the ThiC family. Homodimer. The cofactor is [4Fe-4S] cluster.

The enzyme catalyses 5-amino-1-(5-phospho-beta-D-ribosyl)imidazole + S-adenosyl-L-methionine = 4-amino-2-methyl-5-(phosphooxymethyl)pyrimidine + CO + 5'-deoxyadenosine + formate + L-methionine + 3 H(+). It participates in cofactor biosynthesis; thiamine diphosphate biosynthesis. Functionally, catalyzes the synthesis of the hydroxymethylpyrimidine phosphate (HMP-P) moiety of thiamine from aminoimidazole ribotide (AIR) in a radical S-adenosyl-L-methionine (SAM)-dependent reaction. This is Phosphomethylpyrimidine synthase from Polaromonas naphthalenivorans (strain CJ2).